Here is a 376-residue protein sequence, read N- to C-terminus: Secreted LysM effector LysM9 (376 aa).

The first 25 residues, 1 to 25, serve as a signal peptide directing secretion; it reads MGHFHLSNFIALIGILLVGPTATSG. Positions 41-89 constitute a LysM domain; the sequence is SKYVVQAGETCSAIAQAHSITTADIETYNAQSWAWTGCGQISQGDFICL. Residues 190-219 are disordered; it reads SSETSSSMTTSTSATTSVPTTTSTTTTTKT.

The protein belongs to the secreted LysM effector family.

Its subcellular location is the secreted. Functionally, secreted LysM effector that might have a role in sequestration of chitin oligosaccharides (breakdown products of fungal cell walls that are released during invasion and act as triggers of host immunity) to dampen host defense. This Penicillium expansum (Blue mold rot fungus) protein is Secreted LysM effector LysM9.